A 185-amino-acid chain; its full sequence is Casparian strip membrane protein 2 (185 aa).

Over 1-25 (MKAVSIEAGEGSKAKRVHGVNRGIS) the chain is Cytoplasmic. Residues 26-46 (VFDLVLRIVALVGTLASAVAM) form a helical membrane-spanning segment. Topologically, residues 47–73 (GTADQALSFSTQIVNFEAQYDDIDAFK) are extracellular. A helical transmembrane segment spans residues 74–94 (FFVVSNSITCVYLALSIPISI). Residues 95–106 (FHIIRSRAGKSR) are Cytoplasmic-facing. The helical transmembrane segment at 107–127 (VLLIVLDAIMLVFLTSGASAA) threads the bilayer. At 128–160 (AAIVYLAHNGNTSTNWFSICQQYTDFCQRSAGS) the chain is on the extracellular side. N138 is a glycosylation site (N-linked (GlcNAc...) asparagine). The chain crosses the membrane as a helical span at residues 161–181 (LIGSFGAMALMVLLIILSSIA). Residues 182-185 (LSRR) are Cytoplasmic-facing.

The protein belongs to the Casparian strip membrane proteins (CASP) family. In terms of assembly, homodimer and heterodimers.

Its subcellular location is the cell membrane. In terms of biological role, regulates membrane-cell wall junctions and localized cell wall deposition. Required for establishment of the Casparian strip membrane domain (CSD) and the subsequent formation of Casparian strips, a cell wall modification of the root endodermis that determines an apoplastic barrier between the intraorganismal apoplasm and the extraorganismal apoplasm and prevents lateral diffusion. This Solanum demissum (Wild potato) protein is Casparian strip membrane protein 2.